The sequence spans 202 residues: Na(+)-translocating NADH-quinone reductase subunit E (202 aa).

A run of 6 helical transmembrane segments spans residues 11 to 31 (AVFIENLALSFFLGMCTFLAV), 35 to 55 (VTTSIGLGVAVIVVLGISVPV), 81 to 101 (FLRFLTFIGVIAALVQILEMA), 114 to 134 (GIFLPLITVNCAIFGAVSFMV), 144 to 164 (VVYGIGAGVGWALAITLLAGI), and 180 to 200 (LGITFITVGLMALGFMSFSGI).

The protein belongs to the NqrDE/RnfAE family. As to quaternary structure, composed of six subunits; NqrA, NqrB, NqrC, NqrD, NqrE and NqrF.

Its subcellular location is the cell inner membrane. It carries out the reaction a ubiquinone + n Na(+)(in) + NADH + H(+) = a ubiquinol + n Na(+)(out) + NAD(+). In terms of biological role, NQR complex catalyzes the reduction of ubiquinone-1 to ubiquinol by two successive reactions, coupled with the transport of Na(+) ions from the cytoplasm to the periplasm. NqrA to NqrE are probably involved in the second step, the conversion of ubisemiquinone to ubiquinol. This Pseudoalteromonas translucida (strain TAC 125) protein is Na(+)-translocating NADH-quinone reductase subunit E.